Consider the following 209-residue polypeptide: MTLPANQSPEMVILCNELGEATGTAPKSEIHHSDTPLHLAFSVYIFNGDNKLLVTRRASDKITWPGVLSNSCCGHPQPGEPLTEAIERRVHEELRIRADDIRLVLPEFSYRASMTNGITENELCPVFAAHCKTSGVNPDLNEVSAWEWVHWQWFFESVQAERLLVSPWCRAQVDLLAPLGANPSQWPVAEERRLPKAARTKIDVQLKVS.

Residues H31 and H38 each coordinate Mn(2+). Residues 36–171 enclose the Nudix hydrolase domain; sequence PLHLAFSVYI…RLLVSPWCRA (136 aa). C73 is a catalytic residue. C73 serves as a coordination point for Mg(2+). H75 contributes to the Mn(2+) binding site. E93 is a binding site for Mg(2+). 2 residues coordinate Mn(2+): E120 and E122. E122 is a catalytic residue.

Belongs to the IPP isomerase type 1 family. It depends on Mg(2+) as a cofactor. Mn(2+) is required as a cofactor.

The protein resides in the cytoplasm. It catalyses the reaction isopentenyl diphosphate = dimethylallyl diphosphate. Its pathway is isoprenoid biosynthesis; dimethylallyl diphosphate biosynthesis; dimethylallyl diphosphate from isopentenyl diphosphate: step 1/1. Catalyzes the 1,3-allylic rearrangement of the homoallylic substrate isopentenyl (IPP) to its highly electrophilic allylic isomer, dimethylallyl diphosphate (DMAPP). The protein is Isopentenyl-diphosphate Delta-isomerase of Rhizobium rhizogenes (Agrobacterium rhizogenes).